The following is a 920-amino-acid chain: 2-oxoadipate dehydrogenase complex component E1 (920 aa).

The disordered stretch occupies residues 299 to 322; it reads QGKTRGRQQVKQDGDYSTDPHSRP. Residues 308–322 show a composition bias toward basic and acidic residues; sequence VKQDGDYSTDPHSRP.

Belongs to the alpha-ketoglutarate dehydrogenase family. As to quaternary structure, the 2-oxoadipate dehydrogenase complex is composed of OADH (2-oxoadipate dehydrogenase; E1a), DLST (dihydrolipoamide succinyltransferase; E2) and DLD (dihydrolipoamide dehydrogenase; E3). E1a functional unit is a dimer. It depends on thiamine diphosphate as a cofactor.

Its subcellular location is the mitochondrion. The catalysed reaction is N(6)-[(R)-lipoyl]-L-lysyl-[protein] + 2-oxoadipate + H(+) = N(6)-[(R)-S(8)-glutaryldihydrolipoyl]-L-lysyl-[protein] + CO2. The protein operates within amino-acid degradation. In terms of biological role, 2-oxoadipate dehydrogenase (E1a) component of the 2-oxoadipate dehydrogenase complex (OADHC). Participates in the first step, rate limiting for the overall conversion of 2-oxoadipate (alpha-ketoadipate) to glutaryl-CoA and CO(2) catalyzed by the whole OADHC. Catalyzes the irreversible decarboxylation of 2-oxoadipate via the thiamine diphosphate (ThDP) cofactor and subsequent transfer of the decarboxylated acyl intermediate on an oxidized dihydrolipoyl group that is covalently amidated to the E2 enzyme (dihydrolipoyllysine-residue succinyltransferase or DLST). Can catalyze the decarboxylation of 2-oxoglutarate in vitro, but at a much lower rate than 2-oxoadipate. Responsible for the last step of L-lysine, L-hydroxylysine and L-tryptophan catabolism with the common product being 2-oxoadipate. In Danio rerio (Zebrafish), this protein is 2-oxoadipate dehydrogenase complex component E1 (dhtkd1).